Here is a 216-residue protein sequence, read N- to C-terminus: Somatotropin (216 aa).

The first 26 residues, 1-26, serve as a signal peptide directing secretion; sequence MAADSQTSRLLTFTLLCLLWPQEAGA. Residue H45 coordinates Zn(2+). C78 and C189 form a disulfide bridge. S131 bears the Phosphoserine mark. E198 is a binding site for Zn(2+). A disulfide bridge links C206 with C214.

This sequence belongs to the somatotropin/prolactin family.

Its subcellular location is the secreted. In terms of biological role, plays an important role in growth control. Its major role in stimulating body growth is to stimulate the liver and other tissues to secrete IGF1. It stimulates both the differentiation and proliferation of myoblasts. It also stimulates amino acid uptake and protein synthesis in muscle and other tissues. This is Somatotropin (GH1) from Mesocricetus auratus (Golden hamster).